The sequence spans 454 residues: MDTDTSISEDLKLAVLEKIKPTEAERKELMAVQDELAAEVKAAAEKLCVSDIFVKMVGSAARGTWLSGTHDIDVFISFPEETSRKDLEIRGMGIAREVAKHAEYAEDRHAEHPYLNIVYKGFDVDLVPCFRVCSACQLKSAVDRTPFHNEFIKSRIKGREDDVLLMKQFMRGGRVYGSELKTQGFSGYLTELLIIYYGSFEKTVKAASSWKPGKKIDIMQHSELEHSEPLVMVDPTDPKRNVAAALSLDKFCMFIDHCREFLKSPEIKFFFPESPLPIEDKEFLEKLESRKTSQLAIVFETPDVVDDVLYPQLYKMEQAASSLLSEYDFSVIKTGVWSGKPQTVVMLELISGTLPNVKKRTGPPVWVREHAEKFKDKYEGAENVFGGYIENGKYVYEVHRKYTTAKGLLEEQLLNCSLGKQVYQSVNKGFEVIENAEICRLKDQDFRVFLRKWV.

ATP-binding residues include S59 and R62. The CTP site is built by S59 and R62. Residues D71, D73, and D125 each coordinate Mg(2+). ATP contacts are provided by H148, K167, and Y176. H148, K167, and Y176 together coordinate CTP.

This sequence belongs to the tRNA nucleotidyltransferase/poly(A) polymerase family. Archaeal CCA-adding enzyme subfamily. In terms of assembly, homodimer. Mg(2+) serves as cofactor.

It catalyses the reaction a tRNA precursor + 2 CTP + ATP = a tRNA with a 3' CCA end + 3 diphosphate. It carries out the reaction a tRNA with a 3' CCA end + 2 CTP + ATP = a tRNA with a 3' CCACCA end + 3 diphosphate. Catalyzes the addition and repair of the essential 3'-terminal CCA sequence in tRNAs without using a nucleic acid template. Adds these three nucleotides in the order of C, C, and A to the tRNA nucleotide-73, using CTP and ATP as substrates and producing inorganic pyrophosphate. tRNA 3'-terminal CCA addition is required both for tRNA processing and repair. Also involved in tRNA surveillance by mediating tandem CCA addition to generate a CCACCA at the 3' terminus of unstable tRNAs. While stable tRNAs receive only 3'-terminal CCA, unstable tRNAs are marked with CCACCA and rapidly degraded. This is CCA-adding enzyme from Methanosarcina mazei (strain ATCC BAA-159 / DSM 3647 / Goe1 / Go1 / JCM 11833 / OCM 88) (Methanosarcina frisia).